The following is a 130-amino-acid chain: Small ribosomal subunit protein uS9 (130 aa).

Belongs to the universal ribosomal protein uS9 family.

This Pseudomonas putida (strain ATCC 700007 / DSM 6899 / JCM 31910 / BCRC 17059 / LMG 24140 / F1) protein is Small ribosomal subunit protein uS9.